The primary structure comprises 298 residues: Bifunctional protein FolD (298 aa).

NADP(+) is bound by residues glycine 166 to serine 168, serine 191, and isoleucine 232.

It belongs to the tetrahydrofolate dehydrogenase/cyclohydrolase family. As to quaternary structure, homodimer.

The catalysed reaction is (6R)-5,10-methylene-5,6,7,8-tetrahydrofolate + NADP(+) = (6R)-5,10-methenyltetrahydrofolate + NADPH. It catalyses the reaction (6R)-5,10-methenyltetrahydrofolate + H2O = (6R)-10-formyltetrahydrofolate + H(+). Its pathway is one-carbon metabolism; tetrahydrofolate interconversion. Catalyzes the oxidation of 5,10-methylenetetrahydrofolate to 5,10-methenyltetrahydrofolate and then the hydrolysis of 5,10-methenyltetrahydrofolate to 10-formyltetrahydrofolate. The protein is Bifunctional protein FolD of Maricaulis maris (strain MCS10) (Caulobacter maris).